Reading from the N-terminus, the 1050-residue chain is Inositol hexakisphosphate kinase 1 (1050 aa).

4 disordered regions span residues 87–117, 129–177, 269–319, and 396–423; these read KITR…LSSS, PAIK…IQNV, RQEN…DNEH, and SDLD…NNND. S150 carries the post-translational modification Phosphoserine. A compositionally biased stretch (polar residues) spans 156–173; the sequence is KQQSHQPQVLHHQTSLKP. Positions 290-306 are enriched in basic and acidic residues; sequence ESIKEKPNTFEQDKEGE. Residues 307–316 show a composition bias toward acidic residues; that stretch reads QADEEEDEGD. Residue S396 is modified to Phosphoserine. Basic and acidic residues predominate over residues 402-417; it reads NNGKNDTSNENKDIEV. S469 carries the phosphoserine modification. Residues 508–522 show a composition bias toward low complexity; the sequence is NDSYFSSSSSHNSCS. 2 disordered regions span residues 508–539 and 562–625; these read NDSY…DSGS and RKRN…PNLQ. Phosphoserine is present on residues S537, S539, S566, S583, S589, S646, S664, and S670. Polar residues predominate over residues 566-624; that stretch reads SNTTTMGNHNARLGSSPSFLTQKSRASSHDASNTSMKTLGDSSSQASLQMDDSKVNPNL. 772–780 contacts substrate; sequence PCALDLKMG.

Belongs to the inositol phosphokinase (IPK) family.

It is found in the cytoplasm. The catalysed reaction is 1D-myo-inositol hexakisphosphate + ATP = 5-diphospho-1D-myo-inositol 1,2,3,4,6-pentakisphosphate + ADP. It carries out the reaction 1-diphospho-1D-myo-inositol 2,3,4,5,6-pentakisphosphate + ATP + H(+) = 1,5-bis(diphospho)-1D-myo-inositol 2,3,4,6-tetrakisphosphate + ADP. In terms of biological role, converts inositol hexakisphosphate (InsP6) to diphosphoinositol pentakisphosphate (InsP7/PP-InsP5). Involved in phosphate regulation and polyphosphate accumulation. Required for resistance to salt stress, cell wall integrity, vacuole morphogenesis, and telomere maintenance. The protein is Inositol hexakisphosphate kinase 1 (KCS1) of Saccharomyces cerevisiae (strain ATCC 204508 / S288c) (Baker's yeast).